Reading from the N-terminus, the 209-residue chain is UPF0319 protein VF_1616 (209 aa).

An N-terminal signal peptide occupies residues 1 to 21 (MKIQSIFAASFCLLSSISAHA).

The protein belongs to the UPF0319 family.

This Aliivibrio fischeri (strain ATCC 700601 / ES114) (Vibrio fischeri) protein is UPF0319 protein VF_1616.